Consider the following 141-residue polypeptide: Hemoglobin subunit mu (141 aa).

The 141-residue stretch at 1–141 folds into the Globin domain; that stretch reads MLSAQERAQI…VAVVLTEKYR (141 aa). The heme b site is built by H58 and H87.

This sequence belongs to the globin family. Expressed in erythroid tissues.

The protein is Hemoglobin subunit mu (HBM) of Homo sapiens (Human).